Consider the following 192-residue polypeptide: Mediator of RNA polymerase II transcription subunit 29 (192 aa).

The interval methionine 32–glutamine 51 is disordered.

This sequence belongs to the Mediator complex subunit 29 family. In terms of assembly, component of the Mediator complex.

The protein localises to the nucleus. Functionally, component of the Mediator complex, a coactivator involved in the regulated transcription of nearly all RNA polymerase II-dependent genes. Mediator functions as a bridge to convey information from gene-specific regulatory proteins to the basal RNA polymerase II transcription machinery. Mediator is recruited to promoters by direct interactions with regulatory proteins and serves as a scaffold for the assembly of a functional preinitiation complex with RNA polymerase II and the general transcription factors. The protein is Mediator of RNA polymerase II transcription subunit 29 (ix) of Bombyx mori (Silk moth).